The sequence spans 391 residues: 3-ketoacyl-CoA thiolase (391 aa).

Cys-95 functions as the Acyl-thioester intermediate in the catalytic mechanism. Residues His-347 and Cys-377 each act as proton acceptor in the active site.

It belongs to the thiolase-like superfamily. Thiolase family. As to quaternary structure, heterotetramer of two alpha chains (FadB) and two beta chains (FadA).

Its subcellular location is the cytoplasm. The enzyme catalyses an acyl-CoA + acetyl-CoA = a 3-oxoacyl-CoA + CoA. Its pathway is lipid metabolism; fatty acid beta-oxidation. Functionally, catalyzes the final step of fatty acid oxidation in which acetyl-CoA is released and the CoA ester of a fatty acid two carbons shorter is formed. This Pseudomonas putida (strain ATCC 47054 / DSM 6125 / CFBP 8728 / NCIMB 11950 / KT2440) protein is 3-ketoacyl-CoA thiolase.